A 450-amino-acid polypeptide reads, in one-letter code: Hydrolase ffsE (450 aa).

Ser-266 functions as the Nucleophile in the catalytic mechanism.

This sequence belongs to the AB hydrolase superfamily. FUS2 hydrolase family. In terms of assembly, homodimer.

Its pathway is mycotoxin biosynthesis. Its function is as follows. Hydrolase; part of the gene cluster that mediates the biosynthesis of the cytotoxic leucine-containing cytochalasans, including aspochalasin C, aspochalasin E, TMC-169, flavichalasine F, aspergillin PZ, aspochalasin M and flavichalasine G. The first step in the pathway is catalyzed by the hybrid PKS-NRPS ffsA that utilizes 8 units of malonyl-CoA to iteratively assemble the octaketide chain before addition of L-leucine by the C-terminal NRPS modules. Because ffsA lacks a designated enoylreductase (ER) domain, the required activity is provided the enoyl reductase fssC. The methyltransferase (MT) domain of ffsA catalyzes the alpha-methylation at C10 and C14 using S-adenosyl-L-methionine as the methyl-donating cosubstrate. Reduction by the hydrolyase ffsE, followed by dehydration and intra-molecular Diels-Alder cyclization by the Diels-Alderase ffsF then yield the required isoindolone-fused macrocycle. A number of oxidative steps catalyzed by the tailoring cytochrome P450 monooxygenase ffsD, the FAD-linked oxidoreductase ffsJ and the short-chain dehydrogenase/reductase ffsI, are further required to afford the final products. The protein is Hydrolase ffsE of Aspergillus flavipes.